Reading from the N-terminus, the 73-residue chain is uncharacterized protein (73 aa).

This is an uncharacterized protein from Swinepox virus (strain Kasza) (SWPV).